The primary structure comprises 202 residues: NAD(P)H dehydrogenase (quinone) 2 (202 aa).

Residues 4-190 (VLVLYYSSYG…AGAFHQGEIV (187 aa)) enclose the Flavodoxin-like domain. FMN is bound by residues 10-15 (SSYGHI) and 78-80 (TRF). Y12 is an NAD(+) binding site. Position 98 (W98) interacts with substrate. Residues 113–119 (STGTQHG) and H134 contribute to the FMN site.

Belongs to the WrbA family. FMN is required as a cofactor.

The enzyme catalyses a quinone + NADH + H(+) = a quinol + NAD(+). It carries out the reaction a quinone + NADPH + H(+) = a quinol + NADP(+). This is NAD(P)H dehydrogenase (quinone) 2 from Rhizobium meliloti (strain 1021) (Ensifer meliloti).